Consider the following 233-residue polypeptide: Ras-related protein RabV (233 aa).

15 to 22 (GEKEVGKS) is a GTP binding site. The Effector region signature appears at 37 to 45 (YIPTIGIDF). GTP contacts are provided by residues 63-67 (DYVSH) and 122-125 (TKSD). The segment at 143–182 (QNNNNNNNNNNNNNNNNNNNNNNNNNNNNNSNNNNNNNLQ) is disordered. A compositionally biased stretch (low complexity) spans 144 to 180 (NNNNNNNNNNNNNNNNNNNNNNNNNNNNNSNNNNNNN).

This sequence belongs to the small GTPase superfamily. Rab family.

This Dictyostelium discoideum (Social amoeba) protein is Ras-related protein RabV (rabV).